The sequence spans 737 residues: NAD-dependent protein deacetylase sirtuin-1 (737 aa).

Residues 1-28 show a composition bias toward low complexity; the sequence is MADEVALALQAAGSPSAAAAMEAASQPA. Disordered regions lie at residues 1–56 and 75–125; these read MADE…AVAP and EAAG…EAAA. Residue alanine 2 is modified to N-acetylalanine. The segment at 2-131 is interaction with CLOCK; the sequence is ADEVALALQA…EAAAAAAAAA (130 aa). The segment at 2 to 268 is interaction with H1-4; sequence ADEVALALQA…SCGIPDFRSR (267 aa). Residues serine 14 and serine 25 each carry the phosphoserine modification. The Nuclear localization signal motif lies at 32-39; sequence LRKRPRRD. A Phosphoserine; by MAPK8 modification is found at serine 46. Composition is skewed to low complexity over residues 46-56 and 75-94; these read SPGEPSAAVAP and EAAG…AVAG. A compositionally biased stretch (acidic residues) spans 111-123; it reads DFDDDEGEEEDEA. Residues 135–533 form an interaction with CCAR2 region; the sequence is RDNLLLTDGL…LHISEDSSSP (399 aa). The Nuclear export signal motif lies at 138–145; the sequence is LLLTDGLL. 4 positions are modified to phosphoserine: serine 151, serine 154, serine 164, and serine 165. A disordered region spans residues 152–171; that stretch reads CESDDDDRTSHASSSDWTPR. A Nuclear localization signal motif is present at residues 223 to 230; the sequence is PPKRKKRK. The Deacetylase sirtuin-type domain occupies 228 to 488; sequence KRKDINTIED…NELCHRLGGE (261 aa). Lysine 230 carries the N6-acetyllysine modification. The required for interaction with the sumoylated form of CCAR2 stretch occupies residues 248–251; that stretch reads IIVL. Residues 253–272 and 337–340 each bind NAD(+); these read GAGV…DGIY and QNID. The active-site Proton acceptor is the histidine 355. Residues cysteine 363 and cysteine 366 each contribute to the Zn(2+) site. An N6-acetyllysine modification is found at lysine 369. Residues cysteine 387 and cysteine 390 each coordinate Zn(2+). 2 positions are modified to S-nitrosocysteine: cysteine 387 and cysteine 390. Lysine 422 is subject to N6-acetyllysine. The Nuclear export signal motif lies at 425-431; the sequence is VDLLIVI. Residues 432 to 434, 457 to 459, and cysteine 474 each bind NAD(+); these read GSS and NRE. Position 505 is an N6-acetyllysine (lysine 505). The interval 514-539 is disordered; sequence VHLSELPPTPLHISEDSSSPERTVPQ. Position 522 is a phosphothreonine; by DYRK1A, DYRK3 and MAPK8 (threonine 522). Position 527 is a phosphoserine (serine 527). Residues 529 to 539 show a composition bias toward polar residues; sequence DSSSPERTVPQ. At threonine 536 the chain carries Phosphothreonine. The residue at position 600 (lysine 600) is an N6-acetyllysine. 2 positions are modified to phosphoserine; by CaMK2: serine 649 and serine 651. Residues 653 to 713 are disordered; that stretch reads DDVLSSSSCG…GSGFGADGGD (61 aa). Low complexity predominate over residues 656-676; the sequence is LSSSSCGSNSDSGTCQSPSLE. The segment covering 677-697 has biased composition (acidic residues); sequence EPLEDESEIEEFYNGLEDDTE. At serine 737 the chain carries Phosphoserine.

The protein belongs to the sirtuin family. Class I subfamily. As to quaternary structure, interacts with XBP1 isoform 2. Found in a complex with PCAF and MYOD1 Component of the eNoSC complex, composed of SIRT1, SUV39H1 and RRP8. Interacts with HES1, HEY2 and PML. Interacts with RPS19BP1/AROS. Interacts with CCAR2 (via N-terminus); the interaction disrupts the interaction between SIRT1 and p53/TP53. Interacts with SETD7; the interaction induces the dissociation of SIRT1 from p53/TP53 and increases p53/TP53 activity. Interacts with MYCN, NR1I2, CREBZF, TSC2, TLE1, FOS, JUN, NR0B2, PPARG, NCOR, IRS1, IRS2 and NMNAT1. Interacts with HNF1A; the interaction occurs under nutrient restriction. Interacts with SUZ12; the interaction mediates the association with the PRC4 histone methylation complex which is specific as an association with PCR2 and PCR3 complex variants is not found. Interacts with FOXO1; the interaction deacetylates FOXO1, enhances its DNA-binding ability and increases its transcriptional activity. Interacts with BCL6; leads to a epigenetic repression of specific target genes. Interacts with CLOCK, BMAL1 and PER2. Interacts with PPARA; the interaction seems to be modulated by NAD(+) levels. Interacts with NR1H3 and this interaction is inhibited in the presence of CCAR2. Interacts with CHEK2 and p53/TP53. Exhibits a preferential interaction with sumoylated CCAR2 over its unmodified form. Interacts with PACS2. Interacts with SIRT7. Interacts with PUS7. Interacts with TULP3. Interacts with MORN3; the interaction enhances the ubiquitination of p53/TP53. Requires Zn(2+) as cofactor. Methylated on multiple lysine residues; methylation is enhanced after DNA damage and is dispensable for deacetylase activity toward p53/TP53. In terms of processing, phosphorylated. Phosphorylated by STK4/MST1, resulting in inhibition of SIRT1-mediated p53/TP53 deacetylation. Phosphorylation by MAPK8/JNK1 at Ser-46 and Thr-522 leads to increased nuclear localization and enzymatic activity. Phosphorylation at Thr-522 by DYRK1A and DYRK3 activates deacetylase activity and promotes cell survival. Phosphorylation by mammalian target of rapamycin complex 1 (mTORC1) at Ser-46 inhibits deacetylation activity. Phosphorylated by CaMK2, leading to increased p53/TP53 and NF-kappa-B p65/RELA deacetylation activity. Post-translationally, proteolytically cleaved by cathepsin B upon TNF-alpha treatment to yield catalytic inactive but stable SirtT1 75 kDa fragment (75SirT1). S-nitrosylated by GAPDH, leading to inhibit the NAD-dependent protein deacetylase activity. In terms of processing, acetylated at various Lys residues. Deacetylated via an autocatalytic mechanism. Autodeacetylation at Lys-230 promotes its protein deacetylase activity. Post-translationally, ubiquitinated; leading to degradation. Deubiquitinated by USP22; leading to stabilization. Widely expressed. Weakly expressed in liver and skeletal muscle.

Its subcellular location is the nucleus. It localises to the PML body. The protein localises to the cytoplasm. The protein resides in the mitochondrion. It carries out the reaction N(6)-acetyl-L-lysyl-[protein] + NAD(+) + H2O = 2''-O-acetyl-ADP-D-ribose + nicotinamide + L-lysyl-[protein]. The catalysed reaction is N(6)-propanoyl-L-lysyl-[protein] + NAD(+) + H2O = 3''-O-propanoyl-ADP-D-ribose + nicotinamide + L-lysyl-[protein]. It catalyses the reaction N(6)-(2E)-butenoyl-L-lysyl-[protein] + NAD(+) + H2O = 2''-O-(2E)-but-2-enoyl-ADP-D-ribose + nicotinamide + L-lysyl-[protein]. The enzyme catalyses N(6)-[(S)-lactoyl]-L-lysyl-[protein] + NAD(+) + H2O = 2''-O-(S)-lactoyl-ADP-D-ribose + nicotinamide + L-lysyl-[protein]. Its activity is regulated as follows. Activated by resveratrol (3,5,4'-trihydroxy-trans-stilbene), butein (3,4,2',4'-tetrahydroxychalcone), piceatannol (3,5,3',4'-tetrahydroxy-trans-stilbene), Isoliquiritigenin (4,2',4'-trihydroxychalcone), fisetin (3,7,3',4'-tetrahydroxyflavone) and quercetin (3,5,7,3',4'-pentahydroxyflavone). MAPK8/JNK1 and RPS19BP1/AROS act as positive regulators of deacetylation activity. Inhibited by nicotinamide. Negatively regulated by CCAR2. In terms of biological role, NAD-dependent protein deacetylase that links transcriptional regulation directly to intracellular energetics and participates in the coordination of several separated cellular functions such as cell cycle, response to DNA damage, metabolism, apoptosis and autophagy. Can modulate chromatin function through deacetylation of histones and can promote alterations in the methylation of histones and DNA, leading to transcriptional repression. Deacetylates a broad range of transcription factors and coregulators, thereby regulating target gene expression positively and negatively. Serves as a sensor of the cytosolic ratio of NAD(+)/NADH which is altered by glucose deprivation and metabolic changes associated with caloric restriction. Is essential in skeletal muscle cell differentiation and in response to low nutrients mediates the inhibitory effect on skeletal myoblast differentiation which also involves 5'-AMP-activated protein kinase (AMPK) and nicotinamide phosphoribosyltransferase (NAMPT). Component of the eNoSC (energy-dependent nucleolar silencing) complex, a complex that mediates silencing of rDNA in response to intracellular energy status and acts by recruiting histone-modifying enzymes. The eNoSC complex is able to sense the energy status of cell: upon glucose starvation, elevation of NAD(+)/NADP(+) ratio activates SIRT1, leading to histone H3 deacetylation followed by dimethylation of H3 at 'Lys-9' (H3K9me2) by SUV39H1 and the formation of silent chromatin in the rDNA locus. Deacetylates 'Lys-266' of SUV39H1, leading to its activation. Inhibits skeletal muscle differentiation by deacetylating PCAF and MYOD1. Deacetylates H2A and 'Lys-26' of H1-4. Deacetylates 'Lys-16' of histone H4 (in vitro). Involved in NR0B2/SHP corepression function through chromatin remodeling: Recruited to LRH1 target gene promoters by NR0B2/SHP thereby stimulating histone H3 and H4 deacetylation leading to transcriptional repression. Proposed to contribute to genomic integrity via positive regulation of telomere length; however, reports on localization to pericentromeric heterochromatin are conflicting. Proposed to play a role in constitutive heterochromatin (CH) formation and/or maintenance through regulation of the available pool of nuclear SUV39H1. Upon oxidative/metabolic stress decreases SUV39H1 degradation by inhibiting SUV39H1 polyubiquitination by MDM2. This increase in SUV39H1 levels enhances SUV39H1 turnover in CH, which in turn seems to accelerate renewal of the heterochromatin which correlates with greater genomic integrity during stress response. Deacetylates 'Lys-382' of p53/TP53 and impairs its ability to induce transcription-dependent proapoptotic program and modulate cell senescence. Deacetylates TAF1B and thereby represses rDNA transcription by the RNA polymerase I. Deacetylates MYC, promotes the association of MYC with MAX and decreases MYC stability leading to compromised transformational capability. Deacetylates FOXO3 in response to oxidative stress thereby increasing its ability to induce cell cycle arrest and resistance to oxidative stress but inhibiting FOXO3-mediated induction of apoptosis transcriptional activity; also leading to FOXO3 ubiquitination and protesomal degradation. Appears to have a similar effect on MLLT7/FOXO4 in regulation of transcriptional activity and apoptosis. Deacetylates DNMT1; thereby impairs DNMT1 methyltransferase-independent transcription repressor activity, modulates DNMT1 cell cycle regulatory function and DNMT1-mediated gene silencing. Deacetylates RELA/NF-kappa-B p65 thereby inhibiting its transactivating potential and augments apoptosis in response to TNF-alpha. Deacetylates HIF1A, KAT5/TIP60, RB1 and HIC1. Deacetylates FOXO1, which increases its DNA binding ability and enhances its transcriptional activity leading to increased gluconeogenesis in liver. Inhibits E2F1 transcriptional activity and apoptotic function, possibly by deacetylation. Involved in HES1- and HEY2-mediated transcriptional repression. In cooperation with MYCN seems to be involved in transcriptional repression of DUSP6/MAPK3 leading to MYCN stabilization by phosphorylation at 'Ser-62'. Deacetylates MEF2D. Required for antagonist-mediated transcription suppression of AR-dependent genes which may be linked to local deacetylation of histone H3. Represses HNF1A-mediated transcription. Required for the repression of ESRRG by CREBZF. Deacetylates NR1H3 and NR1H2 and deacetylation of NR1H3 at 'Lys-434' positively regulates transcription of NR1H3:RXR target genes, promotes NR1H3 proteasomal degradation and results in cholesterol efflux; a promoter clearing mechanism after reach round of transcription is proposed. Involved in lipid metabolism: deacetylates LPIN1, thereby inhibiting diacylglycerol synthesis. Implicated in regulation of adipogenesis and fat mobilization in white adipocytes by repression of PPARG which probably involves association with NCOR1 and SMRT/NCOR2. Deacetylates p300/EP300 and PRMT1. Deacetylates ACSS2 leading to its activation, and HMGCS1 deacetylation. Involved in liver and muscle metabolism. Through deacetylation and activation of PPARGC1A is required to activate fatty acid oxidation in skeletal muscle under low-glucose conditions and is involved in glucose homeostasis. Involved in regulation of PPARA and fatty acid beta-oxidation in liver. Involved in positive regulation of insulin secretion in pancreatic beta cells in response to glucose; the function seems to imply transcriptional repression of UCP2. Proposed to deacetylate IRS2 thereby facilitating its insulin-induced tyrosine phosphorylation. Deacetylates SREBF1 isoform SREBP-1C thereby decreasing its stability and transactivation in lipogenic gene expression. Involved in DNA damage response by repressing genes which are involved in DNA repair, such as XPC and TP73, deacetylating XRCC6/Ku70, and facilitating recruitment of additional factors to sites of damaged DNA, such as SIRT1-deacetylated NBN can recruit ATM to initiate DNA repair and SIRT1-deacetylated XPA interacts with RPA2. Also involved in DNA repair of DNA double-strand breaks by homologous recombination and specifically single-strand annealing independently of XRCC6/Ku70 and NBN. Promotes DNA double-strand breaks by mediating deacetylation of SIRT6. Transcriptional suppression of XPC probably involves an E2F4:RBL2 suppressor complex and protein kinase B (AKT) signaling. Transcriptional suppression of TP73 probably involves E2F4 and PCAF. Deacetylates WRN thereby regulating its helicase and exonuclease activities and regulates WRN nuclear translocation in response to DNA damage. Deacetylates APEX1 at 'Lys-6' and 'Lys-7' and stimulates cellular AP endonuclease activity by promoting the association of APEX1 to XRCC1. Catalyzes deacetylation of ERCC4/XPF, thereby impairing interaction with ERCC1 and nucleotide excision repair (NER). Increases p53/TP53-mediated transcription-independent apoptosis by blocking nuclear translocation of cytoplasmic p53/TP53 and probably redirecting it to mitochondria. Deacetylates XRCC6/Ku70 at 'Lys-537' and 'Lys-540' causing it to sequester BAX away from mitochondria thereby inhibiting stress-induced apoptosis. Is involved in autophagy, presumably by deacetylating ATG5, ATG7 and MAP1LC3B/ATG8. Deacetylates AKT1 which leads to enhanced binding of AKT1 and PDK1 to PIP3 and promotes their activation. Proposed to play role in regulation of STK11/LBK1-dependent AMPK signaling pathways implicated in cellular senescence which seems to involve the regulation of the acetylation status of STK11/LBK1. Can deacetylate STK11/LBK1 and thereby increase its activity, cytoplasmic localization and association with STRAD; however, the relevance of such activity in normal cells is unclear. In endothelial cells is shown to inhibit STK11/LBK1 activity and to promote its degradation. Deacetylates SMAD7 at 'Lys-64' and 'Lys-70' thereby promoting its degradation. Deacetylates CIITA and augments its MHC class II transactivation and contributes to its stability. Deacetylates MECOM/EVI1. Deacetylates PML at 'Lys-487' and this deacetylation promotes PML control of PER2 nuclear localization. During the neurogenic transition, represses selective NOTCH1-target genes through histone deacetylation in a BCL6-dependent manner and leading to neuronal differentiation. Regulates the circadian expression of several core clock genes, including BMAL1, RORC, PER2 and CRY1 and plays a critical role in maintaining a controlled rhythmicity in histone acetylation, thereby contributing to circadian chromatin remodeling. Deacetylates BMAL1 and histones at the circadian gene promoters in order to facilitate repression by inhibitory components of the circadian oscillator. Deacetylates PER2, facilitating its ubiquitination and degradation by the proteasome. Protects cardiomyocytes against palmitate-induced apoptosis. Deacetylates XBP1 isoform 2; deacetylation decreases protein stability of XBP1 isoform 2 and inhibits its transcriptional activity. Deacetylates PCK1 and directs its activity toward phosphoenolpyruvate production promoting gluconeogenesis. Involved in the CCAR2-mediated regulation of PCK1 and NR1D1. Deacetylates CTNB1 at 'Lys-49'. In POMC (pro-opiomelanocortin) neurons, required for leptin-induced activation of PI3K signaling. Deacetylates SOX9; promoting SOX9 nuclear localization and transactivation activity. Involved in the regulation of centrosome duplication: Deacetylates CENATAC in G1 phase, allowing for SASS6 accumulation on the centrosome and subsequent procentriole assembly. Deacetylates NDC80/HEC1. In addition to protein deacetylase activity, also acts as a protein-lysine deacylase by mediating protein delactylation, depropionylation and decrotonylation. Mediates depropionylation of Osterix (SP7). Catalyzes decrotonylation of histones; it however does not represent a major histone decrotonylase. Mediates protein delactylation of TEAD1 and YAP1. Functionally, deacetylates 'Lys-382' of p53/TP53, however with lower activity than isoform 1. In combination, the two isoforms exert an additive effect. Isoform 2 regulates p53/TP53 expression and cellular stress response and is in turn repressed by p53/TP53 presenting a SIRT1 isoform-dependent auto-regulatory loop. Catalytically inactive 75SirT1 may be involved in regulation of apoptosis. May be involved in protecting chondrocytes from apoptotic death by associating with cytochrome C and interfering with apoptosome assembly. The polypeptide is NAD-dependent protein deacetylase sirtuin-1 (Sirt1) (Mus musculus (Mouse)).